Consider the following 148-residue polypeptide: 3-hydroxyacyl-[acyl-carrier-protein] dehydratase FabZ (148 aa).

The active site involves His-48.

This sequence belongs to the thioester dehydratase family. FabZ subfamily.

It is found in the cytoplasm. It catalyses the reaction a (3R)-hydroxyacyl-[ACP] = a (2E)-enoyl-[ACP] + H2O. Its function is as follows. Involved in unsaturated fatty acids biosynthesis. Catalyzes the dehydration of short chain beta-hydroxyacyl-ACPs and long chain saturated and unsaturated beta-hydroxyacyl-ACPs. This is 3-hydroxyacyl-[acyl-carrier-protein] dehydratase FabZ from Acinetobacter baylyi (strain ATCC 33305 / BD413 / ADP1).